Reading from the N-terminus, the 485-residue chain is MKVLFVTSEAYPLVKTGGLGDVAGALPAALRDIGVDARILLPAYPDAMRRARLTGKTVPLGNPLGVGETRLLEGTMPDTGCPLWLLDCPAMYERTGGPYMMYSGVDWPDNFRRFALLSKVAAMIGTAGDLMDWRPDVLHGHDWQTGLVPAYLNAWGARRPPFLFSIHNMEYRGLFGPEILDLIGLPRSQFSINGLEFHGLVSTLKAGIVYAQAVATVSPSYAAEIKTPVGGQGLEGLLQARAGDLSGILNGIDSNAWNPQTDPYLAAPIDGADPAPGKRINKDMLKRRMGLDADGDRPLFGLVSRFVAQKGIDLVVAALPGMIAGGAQVAILGAGDTGLEAALNDIVGRYPGAAAVHVGYDEHLAHLIEGAADFLLVPSRFEPCGLTQLYALRYGTIPVVRRTGGLADSVSHLDDGPNGTGIVFDHALPDALEWAIGRAMTLYRDKATLNKVRQRGMSQDFSWKRSAKEYLRVYGSMVGGDVHRP.

Position 15 (lysine 15) interacts with ADP-alpha-D-glucose.

This sequence belongs to the glycosyltransferase 1 family. Bacterial/plant glycogen synthase subfamily.

It catalyses the reaction [(1-&gt;4)-alpha-D-glucosyl](n) + ADP-alpha-D-glucose = [(1-&gt;4)-alpha-D-glucosyl](n+1) + ADP + H(+). It participates in glycan biosynthesis; glycogen biosynthesis. In terms of biological role, synthesizes alpha-1,4-glucan chains using ADP-glucose. This is Glycogen synthase from Rhodospirillum rubrum (strain ATCC 11170 / ATH 1.1.1 / DSM 467 / LMG 4362 / NCIMB 8255 / S1).